The following is a 65-amino-acid chain: Large ribosomal subunit protein bL35 (65 aa).

2 stretches are compositionally biased toward basic residues: residues 1–11 (MPKIKTRRSAA) and 21–43 (KFKR…RKMR). Residues 1-65 (MPKIKTRRSA…KAVRRMLPNG (65 aa)) form a disordered region.

It belongs to the bacterial ribosomal protein bL35 family.

The protein is Large ribosomal subunit protein bL35 of Desulfovibrio desulfuricans (strain ATCC 27774 / DSM 6949 / MB).